The chain runs to 324 residues: Glutamyl-Q tRNA(Asp) synthetase (324 aa).

Residues 5-9 and Glu41 contribute to the L-glutamate site; that span reads RLAPS. Positions 8–18 match the 'HIGH' region motif; sequence PSPTGNIHLGN. Zn(2+) is bound by residues Cys105, Cys107, Tyr128, and Cys132. Residues Tyr193 and Arg211 each contribute to the L-glutamate site. Positions 249–253 match the 'KMSKS' region motif; that stretch reads RLAKR. Residue Lys252 coordinates ATP.

It belongs to the class-I aminoacyl-tRNA synthetase family. GluQ subfamily. Zn(2+) serves as cofactor.

In terms of biological role, catalyzes the tRNA-independent activation of glutamate in presence of ATP and the subsequent transfer of glutamate onto a tRNA(Asp). Glutamate is transferred on the 2-amino-5-(4,5-dihydroxy-2-cyclopenten-1-yl) moiety of the queuosine in the wobble position of the QUC anticodon. The polypeptide is Glutamyl-Q tRNA(Asp) synthetase (Nitratidesulfovibrio vulgaris (strain ATCC 29579 / DSM 644 / CCUG 34227 / NCIMB 8303 / VKM B-1760 / Hildenborough) (Desulfovibrio vulgaris)).